Reading from the N-terminus, the 146-residue chain is Large ribosomal subunit protein uL15 (146 aa).

Basic and acidic residues predominate over residues 1-13 (MKLNELKPNEGSR). The disordered stretch occupies residues 1 to 54 (MKLNELKPNEGSRRNRKRVGRGTSSGYGKTAGRGQKGQLARTGGKTRLGFEGGQ). Over residues 23–35 (TSSGYGKTAGRGQ) the composition is skewed to gly residues.

This sequence belongs to the universal ribosomal protein uL15 family. Part of the 50S ribosomal subunit.

Binds to the 23S rRNA. The sequence is that of Large ribosomal subunit protein uL15 from Lactobacillus gasseri (strain ATCC 33323 / DSM 20243 / BCRC 14619 / CIP 102991 / JCM 1131 / KCTC 3163 / NCIMB 11718 / NCTC 13722 / AM63).